The primary structure comprises 2599 residues: Non-reducing polyketide synthase azaA (2599 aa).

An N-terminal acylcarrier protein transacylase domain (SAT) region spans residues 95–231 (PNILLSPMVV…AARSISSLQQ (137 aa)). The active-site Nucleophile; for transacylase activity is C132. The Proton donor/acceptor; for transacylase activity role is filled by H250. The 419-residue stretch at 372–790 (PNEIAVIGMS…GSNASMVVAQ (419 aa)) folds into the Ketosynthase family 3 (KS3) domain. Residues C539, H674, and H713 each act as for beta-ketoacyl synthase activity in the active site. A malonyl-CoA:ACP transacylase (MAT) domain region spans residues 902 to 1193 (FGGQISNYVG…ITSMASRALG (292 aa)). The segment at 1282–1413 (PKTLWSLIEA…GKLAFLSGQD (132 aa)) is N-terminal hotdog fold. The PKS/mFAS DH domain occupies 1282–1591 (PKTLWSLIEA…YHKVAKASMS (310 aa)). A product template (PT) domain region spans residues 1310–1589 (LVSGHVIANT…INYHKVAKAS (280 aa)). The active-site Proton acceptor; for dehydratase activity is the H1314. Residues 1443 to 1591 (ADDIIQGRNI…YHKVAKASMS (149 aa)) are C-terminal hotdog fold. The active-site Proton donor; for dehydratase activity is the D1499. Residues 1601–1652 (EAAPSSSTRAHPTSSSSPRLPGPFVPEDKSQNETQTAGTNAVAKKKSEKSAQ) form a disordered region. Positions 1602-1619 (AAPSSSTRAHPTSSSSPR) are enriched in low complexity. The 75-residue stretch at 1653-1727 (QNVLDKTRAL…GLVEYVQSAV (75 aa)) folds into the Carrier domain. An O-(pantetheine 4'-phosphoryl)serine modification is found at S1687. The interval 1749 to 1779 (NLAASPSSSSSSTNLTEDSSLDPTETTTNIS) is disordered. The segment covering 1750 to 1766 (LAASPSSSSSSTNLTED) has biased composition (low complexity). Over residues 1769 to 1779 (LDPTETTTNIS) the composition is skewed to polar residues. The tract at residues 1952 to 2140 (DSLLNKLSYR…VGYGQVDWTD (189 aa)) is methyltransferase domain. An NADPH-binding (R) domain region spans residues 2222-2467 (ITGATGSLGV…LCWTPVNDVA (246 aa)).

It depends on pantetheine 4'-phosphate as a cofactor.

The protein operates within secondary metabolite biosynthesis. In terms of biological role, non-reducing polyketide synthase; part of the gene cluster that mediates the biosynthesis of azaphilones, a class of fungal metabolites characterized by a highly oxygenated pyrano-quinone bicyclic core and exhibiting a broad range of bioactivities. In the first step, the non-reducing polyketide synthase azaA forms the hexaketide precursor from successive condensations of five malonyl-CoA units, presumably with a simple acetyl-CoA starter unit. The reactive polyketide chain then undergoes a PT-mediated C2-C7 cyclization to afford the aromatic ring and is eventually released as an aldehyde through the R-domain. The putative ketoreductase azaE is proposed to catalyze the reduction of the terminal ketone resulting in the early culture product FK17-P2a. The monooxygenase azaH was demonstrated to be the only enzyme required to convert FK17-P2a to azanigerone E. AzaH first hydroxylates the benzaldehyde intermediate FK17-P2a at C4, which triggers the formation of the pyran-ring to afford azanigerone E. In parallel, the 2,4-dimethylhexanoyl chain is synthesized by the HR-PKS azaB and is proposed to be transferred to the C4-hydroxyl of azanigerone E by the acyltransferase azaD directly from the ACP domain of azaB. Alternatively, the 2,4-dimethyl-hexanoyl chain may be offloaded from the HR-PKS as a carboxylic acid and converted to an acyl-CoA by azaF. The resulting acyl-CoA molecule could then be taken up as a substrate by AzaD to form azanigerone B. To yield the carboxylic acid substituent in azanigerone A, the hydroxypropyl side chain of azanigerone B would need to undergo a C-C oxidative cleavage catalyzed by cytochrome P450 AzaI. AzaI is proposed to act on a vicinal diol that leads to a C-C bond scission either through an alkoxyradical intermediate or a peroxy complex. In the biosynthesis of azanigerone A, azanigerone B first undergoes hydroxylation at C10, possibly catalyzed by one of the two FAD-dependent monooxygenases encoded in the cluster, azaG or azaL, resulting in the vicinal diol azanigerone C. Oxidative cleavage of azanigerone C by azaI would yield the corresponding aldehyde derivative of azanigerone A. Finally, the dehydrogenase azaJ is proposed to convert the aldehyde functional group into the carboxylic acid, completing the conversion from azanigerone B to azanigerone A. Alternatively, the oxidation of aldehyde to carboxylic acid may be catalyzed by the same P450 enzyme azaI via consecutive oxidation or by endogenous alcohol dehydrogenase. The protein is Non-reducing polyketide synthase azaA of Aspergillus niger (strain ATCC 1015 / CBS 113.46 / FGSC A1144 / LSHB Ac4 / NCTC 3858a / NRRL 328 / USDA 3528.7).